The sequence spans 164 residues: MSQSICSTGLRWLWLVVVVLIIDLGSKYLILQNFALGDTVPLFPSLNLHYARNYGAAFSFLADSGGWQRWFFAGIAIGISVILVVMMYRSKATQKLNNIAYALIIGGALGNLFDRLWHGFVVDMIDFYVGDWHFATFNLADTAICVGAALIVLEGFLPSKAKKQ.

Helical transmembrane passes span 12–32 (WLWLVVVVLIIDLGSKYLILQ), 70–90 (WFFAGIAIGISVILVVMMYRS), and 102–122 (ALIIGGALGNLFDRLWHGFVV). Active-site residues include Asp-123 and Asp-141. The helical transmembrane segment at 137-157 (FNLADTAICVGAALIVLEGFL) threads the bilayer.

The protein belongs to the peptidase A8 family.

It localises to the cell inner membrane. The enzyme catalyses Release of signal peptides from bacterial membrane prolipoproteins. Hydrolyzes -Xaa-Yaa-Zaa-|-(S,diacylglyceryl)Cys-, in which Xaa is hydrophobic (preferably Leu), and Yaa (Ala or Ser) and Zaa (Gly or Ala) have small, neutral side chains.. Its pathway is protein modification; lipoprotein biosynthesis (signal peptide cleavage). This protein specifically catalyzes the removal of signal peptides from prolipoproteins. The sequence is that of Lipoprotein signal peptidase from Escherichia coli O6:K15:H31 (strain 536 / UPEC).